Reading from the N-terminus, the 551-residue chain is 2-(3-amino-3-carboxypropyl)histidine synthase subunit 2 (551 aa).

Residues Cys116, Cys137, and Cys371 each contribute to the [4Fe-4S] cluster site.

This sequence belongs to the DPH1/DPH2 family. DPH2 subfamily. In terms of assembly, component of the 2-(3-amino-3-carboxypropyl)histidine synthase complex composed of DPH1, DPH2, DPH3 and a NADH-dependent reductase, predominantly CBR1. [4Fe-4S] cluster serves as cofactor.

It localises to the cytoplasm. The protein operates within protein modification; peptidyl-diphthamide biosynthesis. In terms of biological role, required for the first step of diphthamide biosynthesis, a post-translational modification of histidine which occurs in elongation factor 2. DPH1 and DPH2 transfer a 3-amino-3-carboxypropyl (ACP) group from S-adenosyl-L-methionine (SAM) to a histidine residue, the reaction is assisted by a reduction system comprising DPH3 and a NADH-dependent reductase, predominantly CBR1. Facilitates the reduction of the catalytic iron-sulfur cluster found in the DPH1 subunit. This chain is 2-(3-amino-3-carboxypropyl)histidine synthase subunit 2 (DPH2), found in Candida glabrata (strain ATCC 2001 / BCRC 20586 / JCM 3761 / NBRC 0622 / NRRL Y-65 / CBS 138) (Yeast).